Consider the following 299-residue polypeptide: Anti-sigma-D factor RsdA (299 aa).

Residues 86–106 (LAAVGSVAAALLVLSGFGAVV) form a helical membrane-spanning segment. The interval 187 to 299 (NTKVETRDPN…APETPVSPTH (113 aa)) is disordered. 2 stretches are compositionally biased toward low complexity: residues 201 to 212 (PGSPSNPAAPGS) and 250 to 271 (PNST…EPGS).

Interacts with ECF RNA polymerase sigma factor SigD; this should inhibit the interaction of SigD with the RNA polymerase catalytic core. The cytosolic fragment is degraded by a ClpP1-ClpP2-ClpX complex, as would be expected after S1P and S2P intramembrane proteolysis. This releases SigD so that it may bind to the RNA polymerase catalytic core.

It localises to the cell membrane. An anti-sigma factor for extracytoplasmic function (ECF) sigma factor SigD. ECF sigma factors are held in an inactive form by an anti-sigma factor until released by regulated intramembrane proteolysis (RIP). RIP occurs when an extracytoplasmic signal triggers a concerted proteolytic cascade to transmit information and elicit cellular responses. The membrane-spanning regulatory substrate protein is first cut extracytoplasmically (site-1 protease, S1P), then within the membrane itself (site-2 protease, S2P), while cytoplasmic proteases finish degrading the regulatory protein, liberating the sigma factor. Neither S1P nor S2P proteases have been so far identified for this anti-sigma factor. This is Anti-sigma-D factor RsdA (rsda) from Mycobacterium bovis (strain ATCC BAA-935 / AF2122/97).